The following is a 166-amino-acid chain: PTS system glucose-specific EIIA component (166 aa).

Residues 34–138 (DPVFAQKMMG…SVISPIIITN (105 aa)) enclose the PTS EIIA type-1 domain. Positions 71 and 86 each coordinate Zn(2+). The Tele-phosphohistidine intermediate; for EIIA activity role is filled by histidine 86. Histidine 86 carries the phosphohistidine; by HPr modification.

In terms of assembly, heterodimer with glycerol kinase (glpk). The cofactor is Zn(2+).

Its subcellular location is the cytoplasm. The phosphoenolpyruvate-dependent sugar phosphotransferase system (sugar PTS), a major carbohydrate active transport system, catalyzes the phosphorylation of incoming sugar substrates concomitantly with their translocation across the cell membrane. The enzyme II complex composed of PtsG and Crr is involved in glucose transport. This Staphylococcus aureus (strain MRSA252) protein is PTS system glucose-specific EIIA component (crr).